Reading from the N-terminus, the 132-residue chain is Small ribosomal subunit protein uS8 (132 aa).

In terms of assembly, part of the 30S ribosomal subunit. Contacts proteins S5 and S12. Post-translationally, a modified and unmodified form exist; the nature of the modification(s) is unknown.

In terms of biological role, one of the primary rRNA binding proteins, it binds directly to 16S rRNA central domain where it helps coordinate assembly of the platform of the 30S subunit. This is Small ribosomal subunit protein uS8 from Rhodopseudomonas palustris (strain ATCC BAA-98 / CGA009).